The following is a 27-amino-acid chain: uncharacterized protein (27 aa).

It is found in the plastid. The protein resides in the chloroplast. This is an uncharacterized protein from Anthoceros angustus (Hornwort).